Reading from the N-terminus, the 283-residue chain is Pantothenate synthetase (283 aa).

26–33 serves as a coordination point for ATP; sequence MGNLHEGH. His-33 serves as the catalytic Proton donor. Residue Gln-57 participates in (R)-pantoate binding. Gln-57 serves as a coordination point for beta-alanine. 144-147 provides a ligand contact to ATP; sequence GKKD. A (R)-pantoate-binding site is contributed by Gln-150. ATP-binding positions include Val-173 and 181–184; that span reads LSSR.

It belongs to the pantothenate synthetase family. In terms of assembly, homodimer.

The protein resides in the cytoplasm. It carries out the reaction (R)-pantoate + beta-alanine + ATP = (R)-pantothenate + AMP + diphosphate + H(+). It functions in the pathway cofactor biosynthesis; (R)-pantothenate biosynthesis; (R)-pantothenate from (R)-pantoate and beta-alanine: step 1/1. In terms of biological role, catalyzes the condensation of pantoate with beta-alanine in an ATP-dependent reaction via a pantoyl-adenylate intermediate. In Ralstonia pickettii (strain 12J), this protein is Pantothenate synthetase.